The chain runs to 286 residues: 33 kDa chaperonin (286 aa).

Intrachain disulfides connect C233–C235 and C267–C270.

The protein belongs to the HSP33 family. Post-translationally, under oxidizing conditions two disulfide bonds are formed involving the reactive cysteines. Under reducing conditions zinc is bound to the reactive cysteines and the protein is inactive.

It is found in the cytoplasm. Redox regulated molecular chaperone. Protects both thermally unfolding and oxidatively damaged proteins from irreversible aggregation. Plays an important role in the bacterial defense system toward oxidative stress. This chain is 33 kDa chaperonin, found in Histophilus somni (strain 2336) (Haemophilus somnus).